The primary structure comprises 105 residues: Urease subunit beta (105 aa).

The protein belongs to the urease beta subunit family. As to quaternary structure, heterotrimer of UreA (gamma), UreB (beta) and UreC (alpha) subunits. Three heterotrimers associate to form the active enzyme.

Its subcellular location is the cytoplasm. The catalysed reaction is urea + 2 H2O + H(+) = hydrogencarbonate + 2 NH4(+). It functions in the pathway nitrogen metabolism; urea degradation; CO(2) and NH(3) from urea (urease route): step 1/1. In Shewanella halifaxensis (strain HAW-EB4), this protein is Urease subunit beta.